Here is a 294-residue protein sequence, read N- to C-terminus: 1D-myo-inositol 2-acetamido-2-deoxy-alpha-D-glucopyranoside deacetylase (294 aa).

Residues histidine 13, aspartate 16, and histidine 148 each contribute to the Zn(2+) site.

Belongs to the MshB deacetylase family. Requires Zn(2+) as cofactor.

The catalysed reaction is 1D-myo-inositol 2-acetamido-2-deoxy-alpha-D-glucopyranoside + H2O = 1D-myo-inositol 2-amino-2-deoxy-alpha-D-glucopyranoside + acetate. Its function is as follows. Catalyzes the deacetylation of 1D-myo-inositol 2-acetamido-2-deoxy-alpha-D-glucopyranoside (GlcNAc-Ins) in the mycothiol biosynthesis pathway. The protein is 1D-myo-inositol 2-acetamido-2-deoxy-alpha-D-glucopyranoside deacetylase of Geodermatophilus obscurus (strain ATCC 25078 / DSM 43160 / JCM 3152 / CCUG 61914 / KCC A-0152 / KCTC 9177 / NBRC 13315 / NRRL B-3577 / G-20).